The sequence spans 849 residues: G-type lectin S-receptor-like serine/threonine-protein kinase B120 (849 aa).

A signal peptide spans 1 to 25; that stretch reads MRFFRKTSLYLSLFLYFFLYESSMA. One can recognise a Bulb-type lectin domain in the interval 26 to 153; the sequence is ANTIRRGESL…DTDRPIWESF (128 aa). Topologically, residues 26 to 438 are extracellular; it reads ANTIRRGESL…SEVGENRKTK (413 aa). Asparagine 110, asparagine 191, asparagine 210, asparagine 230, asparagine 273, and asparagine 282 each carry an N-linked (GlcNAc...) asparagine glycan. One can recognise an EGF-like; atypical domain in the interval 295-332; the sequence is PDSECDQYNRCGKFGICDMKGSNGICSCIHGYEQVSVG. 2 disulfides stabilise this stretch: cysteine 299–cysteine 311 and cysteine 305–cysteine 320. Residues asparagine 333, asparagine 349, and asparagine 388 are each glycosylated (N-linked (GlcNAc...) asparagine). A PAN domain is found at 346-427; it reads CERNISVGED…GGSSLHIRLA (82 aa). Disulfide bonds link cysteine 381/cysteine 402 and cysteine 385/cysteine 391. Residues 439 to 459 form a helical membrane-spanning segment; sequence IAVIVAVLVGVILIGIFALLL. Residues 460-849 lie on the Cytoplasmic side of the membrane; the sequence is WRFKRKKDVS…EITSTVVLGR (390 aa). The Protein kinase domain maps to 529–814; that stretch reads FCKENELGRG…TLAAPRQPTF (286 aa). ATP-binding positions include 535–543 and lysine 557; that span reads LGRGGFGPV. A Phosphoserine modification is found at serine 563. A caM-binding region spans residues 618-635; the sequence is TKQALIDWKLRFSIIEGI. Catalysis depends on aspartate 654, which acts as the Proton acceptor. Residues serine 658 and serine 671 each carry the phosphoserine modification. Residue threonine 688 is modified to Phosphothreonine. Residues serine 732 and serine 837 each carry the phosphoserine modification. Threonine 844 bears the Phosphothreonine mark.

It belongs to the protein kinase superfamily. Ser/Thr protein kinase family.

It localises to the cell membrane. It carries out the reaction L-seryl-[protein] + ATP = O-phospho-L-seryl-[protein] + ADP + H(+). It catalyses the reaction L-threonyl-[protein] + ATP = O-phospho-L-threonyl-[protein] + ADP + H(+). This Arabidopsis thaliana (Mouse-ear cress) protein is G-type lectin S-receptor-like serine/threonine-protein kinase B120 (B120).